A 139-amino-acid chain; its full sequence is Large-conductance mechanosensitive channel (139 aa).

The next 2 membrane-spanning stretches (helical) occupy residues 19 to 39 and 81 to 101; these read VAVIIGAAFGAIVSSMVADVI and GNFLTLTLNFLIVAFVLFMVV.

It belongs to the MscL family. In terms of assembly, homopentamer.

Its subcellular location is the cell inner membrane. Channel that opens in response to stretch forces in the membrane lipid bilayer. May participate in the regulation of osmotic pressure changes within the cell. In Nitrobacter hamburgensis (strain DSM 10229 / NCIMB 13809 / X14), this protein is Large-conductance mechanosensitive channel.